The sequence spans 1152 residues: Nucleolar protein 6 (1152 aa).

Disordered stretches follow at residues 1–30 (MPSAGERPAVKMGPAPAGEQHRRATEDPEV) and 36–55 (EGMDKEKAPSRKRARTEPPA). Serine 65 carries the phosphoserine modification. Positions 92–128 (LLRLQVEELLKEVRLSEKKKERIDNFLKEVTKRIQKV) form a coiled coil. Phosphoserine is present on residues serine 292 and serine 817.

This sequence belongs to the NRAP family. In terms of assembly, part of the small subunit (SSU) processome, composed of more than 70 proteins and the RNA chaperone small nucleolar RNA (snoRNA) U3. Interacts with RRP7A; required for NOL6 localization to nucleolus. Ubiquitously expressed.

It is found in the nucleus. The protein localises to the nucleolus. The protein resides in the chromosome. Its function is as follows. Part of the small subunit (SSU) processome, first precursor of the small eukaryotic ribosomal subunit. During the assembly of the SSU processome in the nucleolus, many ribosome biogenesis factors, an RNA chaperone and ribosomal proteins associate with the nascent pre-rRNA and work in concert to generate RNA folding, modifications, rearrangements and cleavage as well as targeted degradation of pre-ribosomal RNA by the RNA exosome. This is Nucleolar protein 6 (Nol6) from Mus musculus (Mouse).